A 209-amino-acid polypeptide reads, in one-letter code: Ion-translocating oxidoreductase complex subunit G (209 aa).

Residues 9-29 traverse the membrane as a helical segment; it reads GLVLAIFACASTGLVAVTHYL. The residue at position 175 (T175) is an FMN phosphoryl threonine.

Belongs to the RnfG family. As to quaternary structure, the complex is composed of six subunits: RnfA, RnfB, RnfC, RnfD, RnfE and RnfG. FMN serves as cofactor.

The protein resides in the cell inner membrane. Functionally, part of a membrane-bound complex that couples electron transfer with translocation of ions across the membrane. In Vibrio atlanticus (strain LGP32) (Vibrio splendidus (strain Mel32)), this protein is Ion-translocating oxidoreductase complex subunit G.